We begin with the raw amino-acid sequence, 405 residues long: Mevalonate 3,5-bisphosphate decarboxylase (405 aa).

The protein belongs to the mevalonate 3,5-bisphosphate decarboxylase family. Homodimer.

It carries out the reaction (R)-3,5-bisphosphomevalonate + H(+) = isopentenyl phosphate + phosphate + CO2. The protein operates within isoprenoid biosynthesis; isopentenyl diphosphate biosynthesis via mevalonate pathway. Catalyzes the ATP-independent decarboxylation of (R)-mevalonate 3,5-bisphosphate to isopentenyl phosphate. Functions in an alternative mevalonate pathway, only present in extreme acidophiles of the Thermoplasmatales order, which passes through mevalonate 3-phosphate rather than mevalonate 5-phosphate. This is Mevalonate 3,5-bisphosphate decarboxylase from Thermoplasma acidophilum (strain ATCC 25905 / DSM 1728 / JCM 9062 / NBRC 15155 / AMRC-C165).